The primary structure comprises 224 residues: Deoxyribose-phosphate aldolase (224 aa).

Asp94 (proton donor/acceptor) is an active-site residue. Catalysis depends on Lys156, which acts as the Schiff-base intermediate with acetaldehyde. The active-site Proton donor/acceptor is the Lys184.

It belongs to the DeoC/FbaB aldolase family. DeoC type 1 subfamily.

It localises to the cytoplasm. It carries out the reaction 2-deoxy-D-ribose 5-phosphate = D-glyceraldehyde 3-phosphate + acetaldehyde. It functions in the pathway carbohydrate degradation; 2-deoxy-D-ribose 1-phosphate degradation; D-glyceraldehyde 3-phosphate and acetaldehyde from 2-deoxy-alpha-D-ribose 1-phosphate: step 2/2. Its function is as follows. Catalyzes a reversible aldol reaction between acetaldehyde and D-glyceraldehyde 3-phosphate to generate 2-deoxy-D-ribose 5-phosphate. The polypeptide is Deoxyribose-phosphate aldolase (Methanocella arvoryzae (strain DSM 22066 / NBRC 105507 / MRE50)).